The following is a 293-amino-acid chain: Triacylglycerol lipase (293 aa).

One can recognise an AB hydrolase-1 domain in the interval 10 to 206 (PILLVHGLFG…YYSWSGIIKG (197 aa)). Leu17 serves as a coordination point for substrate. The active-site Nucleophile is Ser83. Substrate is bound at residue Gln84. A Ca(2+)-binding site is contributed by Asp217. Active-site charge relay system residues include Asp238 and His260. Asp262, His266, and Arg269 together coordinate Ca(2+).

Belongs to the AB hydrolase superfamily. Pseudomonas lipase family. Ca(2+) is required as a cofactor.

Its subcellular location is the secreted. It catalyses the reaction a triacylglycerol + H2O = a diacylglycerol + a fatty acid + H(+). Catalyzes the hydrolysis of triacylglycerols, with the highest activity with tributyrin (C4), lower activity with tricaprylin (C8), and much lower activity with triacetin (C2), trilaurin (C12) and triolein (C18). The protein is Triacylglycerol lipase (lips) of Pseudomonas fragi.